Consider the following 95-residue polypeptide: Aspartyl/glutamyl-tRNA(Asn/Gln) amidotransferase subunit C (95 aa).

It belongs to the GatC family. In terms of assembly, heterotrimer of A, B and C subunits.

The enzyme catalyses L-glutamyl-tRNA(Gln) + L-glutamine + ATP + H2O = L-glutaminyl-tRNA(Gln) + L-glutamate + ADP + phosphate + H(+). It catalyses the reaction L-aspartyl-tRNA(Asn) + L-glutamine + ATP + H2O = L-asparaginyl-tRNA(Asn) + L-glutamate + ADP + phosphate + 2 H(+). Functionally, allows the formation of correctly charged Asn-tRNA(Asn) or Gln-tRNA(Gln) through the transamidation of misacylated Asp-tRNA(Asn) or Glu-tRNA(Gln) in organisms which lack either or both of asparaginyl-tRNA or glutaminyl-tRNA synthetases. The reaction takes place in the presence of glutamine and ATP through an activated phospho-Asp-tRNA(Asn) or phospho-Glu-tRNA(Gln). The chain is Aspartyl/glutamyl-tRNA(Asn/Gln) amidotransferase subunit C from Methylobacterium nodulans (strain LMG 21967 / CNCM I-2342 / ORS 2060).